The chain runs to 320 residues: uncharacterized protein (320 aa).

The interval 196 to 273 (VVPEYDFDSE…RSKNNSNTTK (78 aa)) is disordered. Positions 200–210 (YDFDSESESDN) are enriched in acidic residues. Residues 211 to 226 (SEEKRFVPVLETEKAP) are compositionally biased toward basic and acidic residues. Residues 248-273 (QPKNPKQTTLKNTLDTRSKNNSNTTK) show a composition bias toward polar residues.

This is an uncharacterized protein from Acanthamoeba polyphaga mimivirus (APMV).